The chain runs to 240 residues: MORN repeat-containing protein 3 (240 aa).

Residues Cys-6 to Gly-35 are interaction with MDM2. 7 MORN repeats span residues Tyr-38–Ala-60, Tyr-62–Thr-84, Tyr-91–Tyr-113, Tyr-114–Ile-136, Tyr-137–Arg-159, Tyr-160–Gln-182, and Phe-184–Glu-205. The tract at residues Thr-76–Lys-100 is interaction with SIRT1. Residues Ala-206–Asp-240 are interaction with TP53.

As to quaternary structure, interacts with MEIG1. Interacts with TP53, MDM2 and SIRT1; the interactions mediate post-transcriptional modifications of TP53 by MDM2 and SIRT1.

It localises to the cytoplasmic vesicle. Its subcellular location is the secretory vesicle. The protein localises to the acrosome. Functionally, assembles a suppression complex (suppresome) by tethering SIRT1 and MDM2 to regulate composite modifications of p53/TP53. Confers both deacetylation-mediated functional inactivation, by SIRT1, and ubiquitination-dependent degradation, by MDM2, of p53/TP53, promoting a proliferative and cell survival behaviors. May play a role in the regulation of spermatogenesis. The polypeptide is MORN repeat-containing protein 3 (MORN3) (Macaca fascicularis (Crab-eating macaque)).